The following is a 100-amino-acid chain: Small ribosomal subunit protein uS14c (100 aa).

This sequence belongs to the universal ribosomal protein uS14 family. As to quaternary structure, part of the 30S ribosomal subunit.

The protein resides in the plastid. Its subcellular location is the chloroplast. Binds 16S rRNA, required for the assembly of 30S particles. The sequence is that of Small ribosomal subunit protein uS14c from Lobularia maritima (Sweet alyssum).